The following is a 271-amino-acid chain: Formamidopyrimidine-DNA glycosylase (271 aa).

The active-site Schiff-base intermediate with DNA is proline 2. The Proton donor role is filled by glutamate 3. Catalysis depends on lysine 58, which acts as the Proton donor; for beta-elimination activity. DNA-binding residues include histidine 92, arginine 111, and lysine 152. The FPG-type zinc-finger motif lies at 237-271 (YVYGKVQKPCKICNNIITLIRQNGRSTYFCNACQN). The Proton donor; for delta-elimination activity role is filled by arginine 261.

The protein belongs to the FPG family. In terms of assembly, monomer. Requires Zn(2+) as cofactor.

It catalyses the reaction Hydrolysis of DNA containing ring-opened 7-methylguanine residues, releasing 2,6-diamino-4-hydroxy-5-(N-methyl)formamidopyrimidine.. The enzyme catalyses 2'-deoxyribonucleotide-(2'-deoxyribose 5'-phosphate)-2'-deoxyribonucleotide-DNA = a 3'-end 2'-deoxyribonucleotide-(2,3-dehydro-2,3-deoxyribose 5'-phosphate)-DNA + a 5'-end 5'-phospho-2'-deoxyribonucleoside-DNA + H(+). Involved in base excision repair of DNA damaged by oxidation or by mutagenic agents. Acts as a DNA glycosylase that recognizes and removes damaged bases. Has a preference for oxidized purines, such as 7,8-dihydro-8-oxoguanine (8-oxoG). Has AP (apurinic/apyrimidinic) lyase activity and introduces nicks in the DNA strand. Cleaves the DNA backbone by beta-delta elimination to generate a single-strand break at the site of the removed base with both 3'- and 5'-phosphates. In Wolbachia pipientis wMel, this protein is Formamidopyrimidine-DNA glycosylase.